Reading from the N-terminus, the 505-residue chain is Glutamyl-tRNA(Gln) amidotransferase subunit A (505 aa).

Catalysis depends on charge relay system residues Lys-80 and Ser-155. Catalysis depends on Ser-179, which acts as the Acyl-ester intermediate.

Belongs to the amidase family. GatA subfamily. Heterotrimer of A, B and C subunits.

It catalyses the reaction L-glutamyl-tRNA(Gln) + L-glutamine + ATP + H2O = L-glutaminyl-tRNA(Gln) + L-glutamate + ADP + phosphate + H(+). In terms of biological role, allows the formation of correctly charged Gln-tRNA(Gln) through the transamidation of misacylated Glu-tRNA(Gln) in organisms which lack glutaminyl-tRNA synthetase. The reaction takes place in the presence of glutamine and ATP through an activated gamma-phospho-Glu-tRNA(Gln). In Acidothermus cellulolyticus (strain ATCC 43068 / DSM 8971 / 11B), this protein is Glutamyl-tRNA(Gln) amidotransferase subunit A.